A 531-amino-acid polypeptide reads, in one-letter code: UDP-glucuronosyltransferase 1A6 (531 aa).

An N-terminal signal peptide occupies residues 1–26 (MACLLPAAQTLPAGFLFLVLWASVLG). Residues Asn-293 and Asn-431 are each glycosylated (N-linked (GlcNAc...) asparagine). Residues 489–505 (VIGFLLAIVLTVVFIVF) traverse the membrane as a helical segment.

The protein belongs to the UDP-glycosyltransferase family. As to expression, expressed in liver, kidney and at very low levels in colon.

It is found in the microsome. Its subcellular location is the endoplasmic reticulum membrane. It carries out the reaction glucuronate acceptor + UDP-alpha-D-glucuronate = acceptor beta-D-glucuronoside + UDP + H(+). The enzyme catalyses (5Z,8Z,11Z,14Z)-eicosatetraenoate + UDP-alpha-D-glucuronate = O-[(5Z),(8Z),(11Z),(14Z)-eicosatetraenoyl]-beta-D-glucuronate + UDP. It catalyses the reaction 15-hydroxy-(5Z,8Z,11Z,13E)-eicosatetraenoate + UDP-alpha-D-glucuronate = 15-O-(beta-D-glucuronosyl)-(5Z,8Z,11Z,14Z)-eicosatetraenoate + UDP + H(+). The catalysed reaction is (E)-ferulate + UDP-alpha-D-glucuronate = (E)-4-O-(beta-D-glucuronosyl)-ferulate + UDP + H(+). It carries out the reaction (E)-ferulate + UDP-alpha-D-glucuronate = (E)-ferulic acid beta-D-glucuronate ester + UDP. Its function is as follows. UDP-glucuronosyltransferase (UGT) that catalyzes phase II biotransformation reactions in which lipophilic substrates are conjugated with glucuronic acid to facilitate their inactivation and excretion from the body. Essential for the elimination and detoxification of drugs, xenobiotics and endogenous compounds. Involved in the glucuronidation of arachidonic acid (AA) and AA-derived eicosanoids including 15-HETE and 20-HETE. Conjugates small planar phenolic molecules such as 4-nitrophenol, 1-naphthol, and 4-methylumbelliferone. The bulky phenol 4-hydroxybiphenyl, androgens and estrogens are not substrates. 2-hydroxybiphenyl is an excellent substrate. Involved in the glucuronidation of the phytochemical ferulic acid at the phenolic or the carboxylic acid group. This Mus musculus (Mouse) protein is UDP-glucuronosyltransferase 1A6.